A 338-amino-acid chain; its full sequence is Ornithine carbamoyltransferase (338 aa).

Residues 56–59 (STRT), Arg107, and 134–137 (HPTQ) contribute to the carbamoyl phosphate site. Residues Asn168, Asp232, and 236-237 (SM) each bind L-ornithine. Residues 274 to 275 (CL) and Arg320 each bind carbamoyl phosphate.

Belongs to the aspartate/ornithine carbamoyltransferase superfamily. OTCase family.

Its subcellular location is the cytoplasm. The enzyme catalyses carbamoyl phosphate + L-ornithine = L-citrulline + phosphate + H(+). It functions in the pathway amino-acid biosynthesis; L-arginine biosynthesis; L-arginine from L-ornithine and carbamoyl phosphate: step 1/3. Its function is as follows. Reversibly catalyzes the transfer of the carbamoyl group from carbamoyl phosphate (CP) to the N(epsilon) atom of ornithine (ORN) to produce L-citrulline. The protein is Ornithine carbamoyltransferase (argI) of Buchnera aphidicola subsp. Acyrthosiphon pisum (strain APS) (Acyrthosiphon pisum symbiotic bacterium).